A 95-amino-acid chain; its full sequence is Aspartyl/glutamyl-tRNA(Asn/Gln) amidotransferase subunit C (95 aa).

It belongs to the GatC family. As to quaternary structure, heterotrimer of A, B and C subunits.

It carries out the reaction L-glutamyl-tRNA(Gln) + L-glutamine + ATP + H2O = L-glutaminyl-tRNA(Gln) + L-glutamate + ADP + phosphate + H(+). The catalysed reaction is L-aspartyl-tRNA(Asn) + L-glutamine + ATP + H2O = L-asparaginyl-tRNA(Asn) + L-glutamate + ADP + phosphate + 2 H(+). Its function is as follows. Allows the formation of correctly charged Asn-tRNA(Asn) or Gln-tRNA(Gln) through the transamidation of misacylated Asp-tRNA(Asn) or Glu-tRNA(Gln) in organisms which lack either or both of asparaginyl-tRNA or glutaminyl-tRNA synthetases. The reaction takes place in the presence of glutamine and ATP through an activated phospho-Asp-tRNA(Asn) or phospho-Glu-tRNA(Gln). The polypeptide is Aspartyl/glutamyl-tRNA(Asn/Gln) amidotransferase subunit C (Geobacter metallireducens (strain ATCC 53774 / DSM 7210 / GS-15)).